Consider the following 132-residue polypeptide: Small ribosomal subunit protein uS8c (132 aa).

The protein belongs to the universal ribosomal protein uS8 family. As to quaternary structure, part of the 30S ribosomal subunit.

The protein localises to the plastid. It is found in the chloroplast. Functionally, one of the primary rRNA binding proteins, it binds directly to 16S rRNA central domain where it helps coordinate assembly of the platform of the 30S subunit. The chain is Small ribosomal subunit protein uS8c (rps8) from Nandina domestica (Heavenly bamboo).